Here is a 153-residue protein sequence, read N- to C-terminus: ORM1-like protein 3 (153 aa).

Topologically, residues 1–21 are cytoplasmic; that stretch reads MNVGTAHSEVNPNTRVMNSRG. 2 helical membrane passes run 22–42 and 43–63; these read IWLSYVLGIGLLHIILLSIPF and VSVPVVWTLTNLIHNMCMYIF. At 64 to 94 the chain is on the cytoplasmic side; the sequence is LHTVKGTPFETPDQGKARLLTHWEQMDYGVQ. A helical transmembrane segment spans residues 95 to 117; it reads FTASRKFLTITPIILYFLTSFYT. Residues 118–121 are Extracellular-facing; it reads KYDR. A helical membrane pass occupies residues 122 to 142; sequence VHFVINTISLLTVLIPKLPQF. At Pro-137 the chain carries Hydroxyproline. Residues 143–153 are Cytoplasmic-facing; it reads HGVRLFGINKY.

Belongs to the ORM family. In terms of assembly, ceramide-sensitive subunit of the serine palmitoyltransferase (SPT) complex, which is also composed of SPTLC1, SPTLC2/3 and SPTSSA/B. When hydroxylated at Pro-137, ubiquitinated via 'Lys-48'-linkage, leading to proteasomal degradation. In endothelial cells, ORMDL3 proteasomal degradation is controlled by the sphingosine 1-phosphate receptor signaling pathway.

The protein localises to the endoplasmic reticulum membrane. Functionally, plays an essential role in the homeostatic regulation of sphingolipid de novo biosynthesis by modulating the activity of the serine palmitoyltransferase (SPT) in response to ceramide levels. When complexed to SPT, the binding of ceramides to its N-terminus stabilizes a conformation that block SPT substrate entry, hence preventing SPT catalytic activity. Through this mechanism, maintains ceramide levels at sufficient concentrations for the production of complex sphingolipids, but which prevents the accumulation of ceramides to levels that trigger apoptosis. This Danio rerio (Zebrafish) protein is ORM1-like protein 3 (ormdl3).